The sequence spans 290 residues: Bifunctional protein FolD (290 aa).

Residues 167–169 (GRS), serine 192, and isoleucine 233 each bind NADP(+).

It belongs to the tetrahydrofolate dehydrogenase/cyclohydrolase family. In terms of assembly, homodimer.

It carries out the reaction (6R)-5,10-methylene-5,6,7,8-tetrahydrofolate + NADP(+) = (6R)-5,10-methenyltetrahydrofolate + NADPH. The enzyme catalyses (6R)-5,10-methenyltetrahydrofolate + H2O = (6R)-10-formyltetrahydrofolate + H(+). Its pathway is one-carbon metabolism; tetrahydrofolate interconversion. In terms of biological role, catalyzes the oxidation of 5,10-methylenetetrahydrofolate to 5,10-methenyltetrahydrofolate and then the hydrolysis of 5,10-methenyltetrahydrofolate to 10-formyltetrahydrofolate. The sequence is that of Bifunctional protein FolD from Gloeobacter violaceus (strain ATCC 29082 / PCC 7421).